The sequence spans 416 residues: Adenylosuccinate synthetase (416 aa).

GTP contacts are provided by residues 13–19 and 41–43; these read GDEGKGK and GHT. The active-site Proton acceptor is the Asp14. Mg(2+)-binding residues include Asp14 and Gly41. IMP is bound by residues 14-17, 39-42, Thr126, Arg140, Gln220, Thr235, and Arg299; these read DEGK and NAGH. The Proton donor role is filled by His42. A substrate-binding site is contributed by 295 to 301; that stretch reads VSTGRKR. GTP is bound by residues Arg301, 327–329, and 405–407; these read KLD and STS.

The protein belongs to the adenylosuccinate synthetase family. As to quaternary structure, homodimer. Mg(2+) serves as cofactor.

It is found in the cytoplasm. The enzyme catalyses IMP + L-aspartate + GTP = N(6)-(1,2-dicarboxyethyl)-AMP + GDP + phosphate + 2 H(+). Its pathway is purine metabolism; AMP biosynthesis via de novo pathway; AMP from IMP: step 1/2. Plays an important role in the de novo pathway of purine nucleotide biosynthesis. Catalyzes the first committed step in the biosynthesis of AMP from IMP. The protein is Adenylosuccinate synthetase of Campylobacter jejuni subsp. jejuni serotype O:23/36 (strain 81-176).